Here is a 206-residue protein sequence, read N- to C-terminus: MARYIGPKCKLSRREGTDLFLKSGVRALDSKCNIETPPGMHGARRGRLSEYGVQLREKQKVRRIYGVLEKQFRNYYKEAARGKGATGENLLQLLEGRLDNVVYRMGFGSTRAEARQLVSHKAVLVNDKPVNIPSYQVKPGDVVSVREKAKNQLRVKGALDLASSRAPVSWVEVDANKMSGVYKSVPERTELPADINENLIVELYSK.

The region spanning 96-156 (GRLDNVVYRM…EKAKNQLRVK (61 aa)) is the S4 RNA-binding domain.

It belongs to the universal ribosomal protein uS4 family. As to quaternary structure, part of the 30S ribosomal subunit. Contacts protein S5. The interaction surface between S4 and S5 is involved in control of translational fidelity.

In terms of biological role, one of the primary rRNA binding proteins, it binds directly to 16S rRNA where it nucleates assembly of the body of the 30S subunit. Its function is as follows. With S5 and S12 plays an important role in translational accuracy. In Marinobacter nauticus (strain ATCC 700491 / DSM 11845 / VT8) (Marinobacter aquaeolei), this protein is Small ribosomal subunit protein uS4.